A 229-amino-acid chain; its full sequence is Cytochrome c oxidase subunit 2 (229 aa).

The Mitochondrial intermembrane portion of the chain corresponds to 1–26 (MANWTQLGLQDASSPLMEELIYFHDY). Residues 27–48 (TLIILTLITILVFYGLASLLFS) traverse the membrane as a helical segment. Over 49-62 (SNTNRFFLEGQGLE) the chain is Mitochondrial matrix. Residues 63 to 82 (TVWTIIPAVILIFIALPSLQ) traverse the membrane as a helical segment. Topologically, residues 83–229 (LLYLMDEVNN…ETWVSNFITE (147 aa)) are mitochondrial intermembrane. Cu cation is bound by residues His161, Cys196, Glu198, Cys200, His204, and Met207. Glu198 serves as a coordination point for Mg(2+).

This sequence belongs to the cytochrome c oxidase subunit 2 family. In terms of assembly, component of the cytochrome c oxidase (complex IV, CIV), a multisubunit enzyme composed of a catalytic core of 3 subunits and several supernumerary subunits. The complex exists as a monomer or a dimer and forms supercomplexes (SCs) in the inner mitochondrial membrane with ubiquinol-cytochrome c oxidoreductase (cytochrome b-c1 complex, complex III, CIII). Cu cation serves as cofactor.

It localises to the mitochondrion inner membrane. The enzyme catalyses 4 Fe(II)-[cytochrome c] + O2 + 8 H(+)(in) = 4 Fe(III)-[cytochrome c] + 2 H2O + 4 H(+)(out). Component of the cytochrome c oxidase, the last enzyme in the mitochondrial electron transport chain which drives oxidative phosphorylation. The respiratory chain contains 3 multisubunit complexes succinate dehydrogenase (complex II, CII), ubiquinol-cytochrome c oxidoreductase (cytochrome b-c1 complex, complex III, CIII) and cytochrome c oxidase (complex IV, CIV), that cooperate to transfer electrons derived from NADH and succinate to molecular oxygen, creating an electrochemical gradient over the inner membrane that drives transmembrane transport and the ATP synthase. Cytochrome c oxidase is the component of the respiratory chain that catalyzes the reduction of oxygen to water. Electrons originating from reduced cytochrome c in the intermembrane space (IMS) are transferred via the dinuclear copper A center (CU(A)) of subunit 2 and heme A of subunit 1 to the active site in subunit 1, a binuclear center (BNC) formed by heme A3 and copper B (CU(B)). The BNC reduces molecular oxygen to 2 water molecules using 4 electrons from cytochrome c in the IMS and 4 protons from the mitochondrial matrix. In Patiria pectinifera (Starfish), this protein is Cytochrome c oxidase subunit 2 (COII).